Reading from the N-terminus, the 226-residue chain is Ribonuclease 3 (226 aa).

The 123-residue stretch at 6 to 128 (TNRLQKKLGY…LIGGVFLDSD (123 aa)) folds into the RNase III domain. Glu-41 is a Mg(2+) binding site. Residue Asp-45 is part of the active site. Mg(2+)-binding residues include Asp-114 and Glu-117. Glu-117 is an active-site residue. A DRBM domain is found at 155–225 (DPKTRLQEYL…AEQALKLLEL (71 aa)).

It belongs to the ribonuclease III family. As to quaternary structure, homodimer. Mg(2+) is required as a cofactor.

The protein localises to the cytoplasm. The catalysed reaction is Endonucleolytic cleavage to 5'-phosphomonoester.. Digests double-stranded RNA. Involved in the processing of primary rRNA transcript to yield the immediate precursors to the large and small rRNAs (23S and 16S). Processes some mRNAs, and tRNAs when they are encoded in the rRNA operon. Processes pre-crRNA and tracrRNA of type II CRISPR loci if present in the organism. The protein is Ribonuclease 3 of Sodalis glossinidius (strain morsitans).